The primary structure comprises 247 residues: 2,3-bisphosphoglycerate-dependent phosphoglycerate mutase (247 aa).

Residues 8–15 (RHGESTWN), 21–22 (TG), arginine 60, 87–90 (ERHY), lysine 98, 114–115 (RR), and 183–184 (GN) each bind substrate. Histidine 9 functions as the Tele-phosphohistidine intermediate in the catalytic mechanism. Glutamate 87 functions as the Proton donor/acceptor in the catalytic mechanism.

Belongs to the phosphoglycerate mutase family. BPG-dependent PGAM subfamily. Homodimer.

The catalysed reaction is (2R)-2-phosphoglycerate = (2R)-3-phosphoglycerate. It participates in carbohydrate degradation; glycolysis; pyruvate from D-glyceraldehyde 3-phosphate: step 3/5. Catalyzes the interconversion of 2-phosphoglycerate and 3-phosphoglycerate. In Albidiferax ferrireducens (strain ATCC BAA-621 / DSM 15236 / T118) (Rhodoferax ferrireducens), this protein is 2,3-bisphosphoglycerate-dependent phosphoglycerate mutase.